A 129-amino-acid polypeptide reads, in one-letter code: UPF0212 protein Mbar_A2902 (129 aa).

This sequence belongs to the UPF0212 family.

The chain is UPF0212 protein Mbar_A2902 from Methanosarcina barkeri (strain Fusaro / DSM 804).